The sequence spans 1124 residues: Probable leucine-rich repeat receptor-like protein kinase At2g33170 (1124 aa).

Positions 1-32 (MGWWIFEFKKESKSMFVGVLFLLTLLVWTSES) are cleaved as a signal peptide. Residues 33–752 (LNSDGQFLLE…LKAGSARRGR (720 aa)) are Extracellular-facing. Residues asparagine 72, asparagine 96, and asparagine 131 are each glycosylated (N-linked (GlcNAc...) asparagine). LRR repeat units lie at residues 86 to 109 (VVTS…GGLV), 110 to 132 (NLVY…IGNC), 134 to 156 (KLEV…INKL), 158 to 180 (QLRS…IGDL), 182 to 205 (NLEE…GNLN), 206 to 228 (KLTT…IGKC), 230 to 252 (NLKL…IGML), 254 to 277 (KLQE…GNLT), 278 to 300 (SLET…IGNM), 302 to 325 (SLKK…GKLS), 326 to 348 (KVME…LSKI), 350 to 371 (ELRL…ELSK), 374 to 397 (NLAK…QNLT), 398 to 420 (SMRQ…LGLY), 422 to 444 (PLWV…ICQQ), 446 to 468 (NLIL…VLRC), 470 to 491 (SLLQ…ELCK), 494 to 516 (NLSA…IGTC), 518 to 540 (KLQR…ISKL), 542 to 564 (NLVT…IANC), 566 to 588 (MLQR…LGSL), 590 to 613 (QLEI…GNLT), 614 to 636 (HLTE…LGLL), 638 to 661 (SLQI…IGNL), 663 to 686 (LLMY…ENLS), and 687 to 709 (SLLG…QIFQ). The N-linked (GlcNAc...) asparagine glycan is linked to asparagine 192. N-linked (GlcNAc...) asparagine glycosylation occurs at asparagine 275. N-linked (GlcNAc...) asparagine glycosylation occurs at asparagine 314. Asparagine 395 carries an N-linked (GlcNAc...) asparagine glycan. Asparagine 494 is a glycosylation site (N-linked (GlcNAc...) asparagine). N-linked (GlcNAc...) asparagine glycosylation occurs at asparagine 547. N-linked (GlcNAc...) asparagine glycosylation is present at asparagine 611. N-linked (GlcNAc...) asparagine glycosylation is found at asparagine 644, asparagine 684, asparagine 692, asparagine 697, and asparagine 710. The helical transmembrane segment at 753-773 (IIIIVSSVIGGISLLLIAIVV) threads the bilayer. Residues 774 to 1124 (HFLRNPVEPT…CSDLPPPAPP (351 aa)) are Cytoplasmic-facing. Phosphothreonine occurs at positions 808 and 816. Positions 819–1100 (FHDSYIVGRG…TMREVVLMLI (282 aa)) constitute a Protein kinase domain. ATP-binding positions include 825 to 833 (VGRGACGTV) and lysine 847. Phosphotyrosine is present on residues tyrosine 901 and tyrosine 939. Catalysis depends on aspartate 952, which acts as the Proton acceptor. Residue serine 986 is modified to Phosphoserine. Residues tyrosine 994 and tyrosine 1001 each carry the phosphotyrosine modification. Threonine 1002 is subject to Phosphothreonine.

It belongs to the protein kinase superfamily. Ser/Thr protein kinase family.

Its subcellular location is the membrane. It carries out the reaction L-seryl-[protein] + ATP = O-phospho-L-seryl-[protein] + ADP + H(+). The catalysed reaction is L-threonyl-[protein] + ATP = O-phospho-L-threonyl-[protein] + ADP + H(+). The sequence is that of Probable leucine-rich repeat receptor-like protein kinase At2g33170 from Arabidopsis thaliana (Mouse-ear cress).